The primary structure comprises 85 residues: uncharacterized protein (85 aa).

The signal sequence occupies residues 1-21 (MRPLLCALAGLALLCAVGALA). Over residues 22 to 35 (DGREDRGSPGDTGE) the composition is skewed to basic and acidic residues. The interval 22–85 (DGREDRGSPG…EVVHLPGSTL (64 aa)) is disordered. Over residues 36-51 (RPAGPARGPGLEPARG) the composition is skewed to low complexity.

It localises to the secreted. This is an uncharacterized protein from Homo sapiens (Human).